The following is a 243-amino-acid chain: Vesicle-associated membrane protein-associated protein B (243 aa).

Position 2 is an N-acetylalanine (alanine 2). Over alanine 2–glutamate 218 the chain is Cytoplasmic. The 118-residue stretch at valine 7 to glutamate 124 folds into the MSP domain. The residue at position 146 (serine 146) is a Phosphoserine. Residue lysine 147 forms a Glycyl lysine isopeptide (Lys-Gly) (interchain with G-Cter in SUMO1) linkage. Threonine 150 is subject to Phosphothreonine. Residues serine 158 and serine 159 each carry the phosphoserine modification. The stretch at leucine 161 to leucine 196 forms a coiled coil. Basic and acidic residues predominate over residues glutamate 185–arginine 197. The segment at glutamate 185–glutamate 217 is disordered. Serine 206 is modified (phosphoserine). The helical; Anchor for type IV membrane protein transmembrane segment at glycine 219–glycine 239 threads the bilayer.

It belongs to the VAMP-associated protein (VAP) (TC 9.B.17) family. Homodimer, and heterodimer with VAPA. Interacts with VAMP1 and VAMP2. Interacts (via MSP domain) with ZFYVE27. Interacts with RMDN3. Interacts with KIF5A in a ZFYVE27-dependent manner. Interacts (via MSP domain) with STARD3 (via phospho-FFAT motif). Interacts with STARD3NL (via FFAT motif). Interacts with CERT1. Interacts with PLEKHA3 and SACM1L to form a ternary complex. Interacts with VPS13A (via FFAT motif). Interacts with RB1CC1 (via phosphorylated FFAT motif), MIGA2 (via phosphorylated FFAT motif), RMDN3 (via phosphorylated FFAT motif), OSBPL1A (via FFAT motif), KCNB1 (via phosphorylated FFAT motif) and KCNB2 (via phosphorylated FFAT motif). Interacts (via MSP domain) with WDR44 (via FFAT motif); the interactions connect the endoplasmic reticulum (ER) with the endosomal tubule.

The protein localises to the endoplasmic reticulum membrane. Endoplasmic reticulum (ER)-anchored protein that mediates the formation of contact sites between the ER and endosomes via interaction with FFAT motif-containing proteins such as STARD3 or WDR44. Interacts with STARD3 in a FFAT motif phosphorylation dependent manner. Via interaction with WDR44 participates in neosynthesized protein export. Participates in the endoplasmic reticulum unfolded protein response (UPR) by inducing ERN1/IRE1 activity. Involved in cellular calcium homeostasis regulation. The sequence is that of Vesicle-associated membrane protein-associated protein B from Sus scrofa (Pig).